The primary structure comprises 275 residues: Vitamin B12-binding protein (275 aa).

The N-terminal stretch at M1–A19 is a signal peptide. In terms of domain architecture, Fe/B12 periplasmic-binding spans R25 to K272. A disulfide bridge links C185 with C265.

This sequence belongs to the BtuF family. As to quaternary structure, the complex is composed of two ATP-binding proteins (BtuD), two transmembrane proteins (BtuC) and a solute-binding protein (BtuF).

Its subcellular location is the periplasm. Functionally, part of the ABC transporter complex BtuCDF involved in vitamin B12 import. Binds vitamin B12 and delivers it to the periplasmic surface of BtuC. This is Vitamin B12-binding protein from Vibrio parahaemolyticus serotype O3:K6 (strain RIMD 2210633).